The primary structure comprises 186 residues: Peptide deformylase 2 (186 aa).

Fe cation is bound by residues Cys104 and His146. Glu147 is an active-site residue. Residue His150 coordinates Fe cation.

This sequence belongs to the polypeptide deformylase family. Fe(2+) serves as cofactor.

It carries out the reaction N-terminal N-formyl-L-methionyl-[peptide] + H2O = N-terminal L-methionyl-[peptide] + formate. Its function is as follows. Removes the formyl group from the N-terminal Met of newly synthesized proteins. Requires at least a dipeptide for an efficient rate of reaction. N-terminal L-methionine is a prerequisite for activity but the enzyme has broad specificity at other positions. The polypeptide is Peptide deformylase 2 (Streptomyces avermitilis (strain ATCC 31267 / DSM 46492 / JCM 5070 / NBRC 14893 / NCIMB 12804 / NRRL 8165 / MA-4680)).